Reading from the N-terminus, the 232-residue chain is Aquaporin Z (232 aa).

The next 2 helical transmembrane spans lie at 8–28 and 33–53; these read AFGTFWLVLGGCGSAVLAAGF and IGLLGVALAFGLTVLTMAFAI. The NPA 1 motif lies at 62–64; sequence NPA. The next 3 helical transmembrane spans lie at 84 to 104, 130 to 150, and 159 to 179; these read IIAQVIGGLIAGGILYVIATG, MLAALVSEIVMTMMFLIVIMG, and GFAPIAIGLCLTLIHLISIPV. An NPA 2 motif is present at residues 185–187; sequence NPA. A helical transmembrane segment spans residues 201–221; it reads VSQLWLFWVAPIVGGVLGAVI.

Belongs to the MIP/aquaporin (TC 1.A.8) family. Homotetramer.

It localises to the cell inner membrane. It carries out the reaction H2O(in) = H2O(out). Its function is as follows. Channel that permits osmotically driven movement of water in both directions. It is involved in the osmoregulation and in the maintenance of cell turgor during volume expansion in rapidly growing cells. It mediates rapid entry or exit of water in response to abrupt changes in osmolarity. This is Aquaporin Z from Vibrio parahaemolyticus serotype O3:K6 (strain RIMD 2210633).